Consider the following 74-residue polypeptide: uncharacterized protein (74 aa).

An N-terminal signal peptide occupies residues 1–25 (MMMTDLPENIRKTAVALLRLGEATA).

This is an uncharacterized protein from Archaeoglobus fulgidus (strain ATCC 49558 / DSM 4304 / JCM 9628 / NBRC 100126 / VC-16).